The following is a 402-amino-acid chain: Acetylornithine aminotransferase (402 aa).

Pyridoxal 5'-phosphate contacts are provided by residues 106–107 (GA) and F132. N(2)-acetyl-L-ornithine is bound at residue R135. Residue 217–220 (DEVQ) coordinates pyridoxal 5'-phosphate. K247 carries the post-translational modification N6-(pyridoxal phosphate)lysine. A N(2)-acetyl-L-ornithine-binding site is contributed by T275. T276 provides a ligand contact to pyridoxal 5'-phosphate.

It belongs to the class-III pyridoxal-phosphate-dependent aminotransferase family. ArgD subfamily. Homodimer. It depends on pyridoxal 5'-phosphate as a cofactor.

It is found in the cytoplasm. It carries out the reaction N(2)-acetyl-L-ornithine + 2-oxoglutarate = N-acetyl-L-glutamate 5-semialdehyde + L-glutamate. Its pathway is amino-acid biosynthesis; L-arginine biosynthesis; N(2)-acetyl-L-ornithine from L-glutamate: step 4/4. The polypeptide is Acetylornithine aminotransferase (Streptomyces coelicolor (strain ATCC BAA-471 / A3(2) / M145)).